We begin with the raw amino-acid sequence, 132 residues long: Small ribosomal subunit protein uS8 (132 aa).

The protein belongs to the universal ribosomal protein uS8 family. In terms of assembly, part of the 30S ribosomal subunit. Contacts proteins S5 and S12.

One of the primary rRNA binding proteins, it binds directly to 16S rRNA central domain where it helps coordinate assembly of the platform of the 30S subunit. This Leifsonia xyli subsp. xyli (strain CTCB07) protein is Small ribosomal subunit protein uS8.